The primary structure comprises 289 residues: 4-hydroxy-tetrahydrodipicolinate synthase (289 aa).

Thr46 provides a ligand contact to pyruvate. The active-site Proton donor/acceptor is Tyr134. The Schiff-base intermediate with substrate role is filled by Lys162. Val204 lines the pyruvate pocket.

It belongs to the DapA family. In terms of assembly, homotetramer; dimer of dimers.

It localises to the cytoplasm. The catalysed reaction is L-aspartate 4-semialdehyde + pyruvate = (2S,4S)-4-hydroxy-2,3,4,5-tetrahydrodipicolinate + H2O + H(+). Its pathway is amino-acid biosynthesis; L-lysine biosynthesis via DAP pathway; (S)-tetrahydrodipicolinate from L-aspartate: step 3/4. Catalyzes the condensation of (S)-aspartate-beta-semialdehyde [(S)-ASA] and pyruvate to 4-hydroxy-tetrahydrodipicolinate (HTPA). The polypeptide is 4-hydroxy-tetrahydrodipicolinate synthase (Bacillus velezensis (strain DSM 23117 / BGSC 10A6 / LMG 26770 / FZB42) (Bacillus amyloliquefaciens subsp. plantarum)).